The primary structure comprises 227 residues: MELVFIRHGQSEWNAKNLFTGWRDVKLSEQGLAEAAAAGKKLKENGYEFDIAFTSVLTRAIKTCNIVLEESDQLFVPQIKTWRLNERHYGQLQGLDKKQTAEQYGDEQVRIWRRSYDTLPPLLDKDDEFSAHKDRRYAHLPADVVPDGENLKVTLERVLPFWEDQIAPAILSGKRVLVAAHGNSLRALAKHIEGISDEDIMGLEIPTGQPLVYKLDDNLKVIEKFYL.

Substrate-binding positions include 7 to 14 (RHGQSEWN), 20 to 21 (TG), Arg59, 86 to 89 (ERHY), Lys97, 113 to 114 (RR), and 182 to 183 (GN). His8 (tele-phosphohistidine intermediate) is an active-site residue. The Proton donor/acceptor role is filled by Glu86.

The protein belongs to the phosphoglycerate mutase family. BPG-dependent PGAM subfamily. As to quaternary structure, homodimer.

It carries out the reaction (2R)-2-phosphoglycerate = (2R)-3-phosphoglycerate. Its pathway is carbohydrate degradation; glycolysis; pyruvate from D-glyceraldehyde 3-phosphate: step 3/5. Its function is as follows. Catalyzes the interconversion of 2-phosphoglycerate and 3-phosphoglycerate. This is 2,3-bisphosphoglycerate-dependent phosphoglycerate mutase from Neisseria meningitidis serogroup B (strain ATCC BAA-335 / MC58).